Here is a 571-residue protein sequence, read N- to C-terminus: FAD-linked oxidoreductase patO (571 aa).

The signal sequence occupies residues Met-1–Gly-23. N-linked (GlcNAc...) asparagine glycans are attached at residues Asn-47, Asn-101, Asn-125, Asn-179, Asn-341, Asn-374, Asn-380, Asn-421, Asn-445, and Asn-480. Residues Thr-115 to Asp-294 enclose the FAD-binding PCMH-type domain.

Belongs to the oxygen-dependent FAD-linked oxidoreductase family. The cofactor is FAD.

It is found in the vacuole lumen. The protein operates within mycotoxin biosynthesis; patulin biosynthesis. FAD-linked oxidoreductase; part of the gene cluster that mediates the biosynthesis of patulin, an acetate-derived tetraketide mycotoxin produced by several fungal species that shows antimicrobial properties against several bacteria. PatO acts with patJ in the vacuole to convert gentisyl alcohol to isoepoxydon. The pathway begins with the synthesis of 6-methylsalicylic acid by the polyketide synthase (PKS) patK via condensation of acetate and malonate units. The 6-methylsalicylic acid decarboxylase patG then catalyzes the decarboxylation of 6-methylsalicylic acid to yield m-cresol (also known as 3-methylphenol). These first reactions occur in the cytosol. The intermediate m-cresol is then transported into the endoplasmic reticulum where the cytochrome P450 monooxygenase patH converts it to m-hydroxybenzyl alcohol, which is further converted to gentisyl alcohol by the cytochrome P450 monooxygenase patI. The oxidoreductases patJ and patO further convert gentisyl alcohol to isoepoxydon in the vacuole. PatN catalyzes then the transformation of isoepoxydon into phyllostine. The cluster protein patF is responsible for the conversion from phyllostine to neopatulin whereas the alcohol dehydrogenase patD converts neopatulin to E-ascladiol. The steps between isoepoxydon and E-ascladiol occur in the cytosol, and E-ascladiol is probably secreted to the extracellular space by one of the cluster-specific transporters patC or patM. Finally, the secreted patulin synthase patE catalyzes the conversion of E-ascladiol to patulin. This Penicillium expansum (Blue mold rot fungus) protein is FAD-linked oxidoreductase patO.